The primary structure comprises 327 residues: BarH-like 1 homeobox protein (327 aa).

Disordered stretches follow at residues 1-90 (MEGS…AQSR), 113-181 (PYSS…PRKA), and 303-327 (LQGA…AQPR). A compositionally biased stretch (low complexity) spans 33 to 54 (RSPLELSPRSESSSDCSSPASP). Residues 79 to 90 (QPGQLSAPAQSR) are compositionally biased toward polar residues. Basic and acidic residues-rich tracts occupy residues 133–143 (AGEDFRDKLDK) and 152–166 (SEYK…EISS). Positions 178-237 (PRKARTAFTDHQLAQLERSFERQKYLSVQDRMELAASLNLTDTQVKTWYQNRRTKWKRQT) form a DNA-binding region, homeobox. Positions 308–318 (EPPPPLPPLPG) are enriched in pro residues.

It belongs to the BAR homeobox family.

Its subcellular location is the nucleus. This Mus musculus (Mouse) protein is BarH-like 1 homeobox protein (Barhl1).